The primary structure comprises 205 residues: Holliday junction branch migration complex subunit RuvA (205 aa).

The tract at residues Met1 to Arg64 is domain I. The interval Thr65 to Val143 is domain II. The interval Lys144–Ala154 is flexible linker. A domain III region spans residues Ala154 to Lys205.

This sequence belongs to the RuvA family. As to quaternary structure, homotetramer. Forms an RuvA(8)-RuvB(12)-Holliday junction (HJ) complex. HJ DNA is sandwiched between 2 RuvA tetramers; dsDNA enters through RuvA and exits via RuvB. An RuvB hexamer assembles on each DNA strand where it exits the tetramer. Each RuvB hexamer is contacted by two RuvA subunits (via domain III) on 2 adjacent RuvB subunits; this complex drives branch migration. In the full resolvosome a probable DNA-RuvA(4)-RuvB(12)-RuvC(2) complex forms which resolves the HJ.

The protein localises to the cytoplasm. Functionally, the RuvA-RuvB-RuvC complex processes Holliday junction (HJ) DNA during genetic recombination and DNA repair, while the RuvA-RuvB complex plays an important role in the rescue of blocked DNA replication forks via replication fork reversal (RFR). RuvA specifically binds to HJ cruciform DNA, conferring on it an open structure. The RuvB hexamer acts as an ATP-dependent pump, pulling dsDNA into and through the RuvAB complex. HJ branch migration allows RuvC to scan DNA until it finds its consensus sequence, where it cleaves and resolves the cruciform DNA. This is Holliday junction branch migration complex subunit RuvA from Rhodopseudomonas palustris (strain TIE-1).